The primary structure comprises 416 residues: Diaminopimelate decarboxylase (416 aa).

Position 60 is an N6-(pyridoxal phosphate)lysine (Lys-60). Residues Gly-240 and 274-277 contribute to the pyridoxal 5'-phosphate site; that span reads EPGR. Positions 277, 313, and 317 each coordinate substrate. Cys-343 serves as the catalytic Proton donor. Substrate-binding residues include Glu-344 and Tyr-371. Tyr-371 lines the pyridoxal 5'-phosphate pocket.

It belongs to the Orn/Lys/Arg decarboxylase class-II family. LysA subfamily. As to quaternary structure, homodimer. The cofactor is pyridoxal 5'-phosphate.

It catalyses the reaction meso-2,6-diaminopimelate + H(+) = L-lysine + CO2. The protein operates within amino-acid biosynthesis; L-lysine biosynthesis via DAP pathway; L-lysine from DL-2,6-diaminopimelate: step 1/1. Specifically catalyzes the decarboxylation of meso-diaminopimelate (meso-DAP) to L-lysine. The polypeptide is Diaminopimelate decarboxylase (Pseudomonas fluorescens).